Consider the following 1073-residue polypeptide: DNA-directed RNA polymerase subunit beta (1073 aa).

It belongs to the RNA polymerase beta chain family. In plastids the minimal PEP RNA polymerase catalytic core is composed of four subunits: alpha, beta, beta', and beta''. When a (nuclear-encoded) sigma factor is associated with the core the holoenzyme is formed, which can initiate transcription.

The protein localises to the plastid. It localises to the chloroplast. The enzyme catalyses RNA(n) + a ribonucleoside 5'-triphosphate = RNA(n+1) + diphosphate. In terms of biological role, DNA-dependent RNA polymerase catalyzes the transcription of DNA into RNA using the four ribonucleoside triphosphates as substrates. The protein is DNA-directed RNA polymerase subunit beta of Aethionema cordifolium (Lebanon stonecress).